The chain runs to 780 residues: Subtilisin-like protease SBT5.1 (780 aa).

A signal peptide spans 1 to 25 (MMRCLTITIMFFMFFFLSVIQKCKS). Residues 26–106 (ETSKSGDYII…VFPDQMLQLH (81 aa)) constitute a propeptide, activation peptide. The region spanning 33–106 (YIIYMGAASS…VFPDQMLQLH (74 aa)) is the Inhibitor I9 domain. Residues 110–617 (SWDFLVQESY…AGQVTIFGPS (508 aa)) form the Peptidase S8 domain. The active-site Charge relay system is aspartate 147. Asparagine 197 carries N-linked (GlcNAc...) asparagine glycosylation. Catalysis depends on histidine 215, which acts as the Charge relay system. Asparagine 230 is a glycosylation site (N-linked (GlcNAc...) asparagine). The region spanning 385-469 (IDANEEAARN…PEDGIQIMSY (85 aa)) is the PA domain. Asparagine 471 carries an N-linked (GlcNAc...) asparagine glycan. Catalysis depends on serine 550, which acts as the Charge relay system. A glycan (N-linked (GlcNAc...) asparagine) is linked at asparagine 776.

This sequence belongs to the peptidase S8 family.

Its subcellular location is the secreted. This is Subtilisin-like protease SBT5.1 from Arabidopsis thaliana (Mouse-ear cress).